The chain runs to 145 residues: D-aminoacyl-tRNA deacylase (145 aa).

The short motif at 137-138 (GP) is the Gly-cisPro motif, important for rejection of L-amino acids element.

The protein belongs to the DTD family. Homodimer.

It is found in the cytoplasm. The enzyme catalyses glycyl-tRNA(Ala) + H2O = tRNA(Ala) + glycine + H(+). It catalyses the reaction a D-aminoacyl-tRNA + H2O = a tRNA + a D-alpha-amino acid + H(+). An aminoacyl-tRNA editing enzyme that deacylates mischarged D-aminoacyl-tRNAs. Also deacylates mischarged glycyl-tRNA(Ala), protecting cells against glycine mischarging by AlaRS. Acts via tRNA-based rather than protein-based catalysis; rejects L-amino acids rather than detecting D-amino acids in the active site. By recycling D-aminoacyl-tRNA to D-amino acids and free tRNA molecules, this enzyme counteracts the toxicity associated with the formation of D-aminoacyl-tRNA entities in vivo and helps enforce protein L-homochirality. This Cronobacter sakazakii (strain ATCC BAA-894) (Enterobacter sakazakii) protein is D-aminoacyl-tRNA deacylase.